A 143-amino-acid chain; its full sequence is Large ribosomal subunit protein uL15 (143 aa).

Residues 1–59 (MELNTITPGQGAKHAKRRVGRGIGSGLGKTAGRGHKGQKSRSGGYHKVGFEGGQMPMQR) are disordered. The segment covering 21-31 (RGIGSGLGKTA) has biased composition (gly residues).

It belongs to the universal ribosomal protein uL15 family. As to quaternary structure, part of the 50S ribosomal subunit.

Its function is as follows. Binds to the 23S rRNA. The polypeptide is Large ribosomal subunit protein uL15 (Polaromonas naphthalenivorans (strain CJ2)).